The chain runs to 256 residues: Tryptophan synthase alpha chain (256 aa).

Active-site proton acceptor residues include E46 and D57.

This sequence belongs to the TrpA family. In terms of assembly, tetramer of two alpha and two beta chains.

The enzyme catalyses (1S,2R)-1-C-(indol-3-yl)glycerol 3-phosphate + L-serine = D-glyceraldehyde 3-phosphate + L-tryptophan + H2O. Its pathway is amino-acid biosynthesis; L-tryptophan biosynthesis; L-tryptophan from chorismate: step 5/5. Functionally, the alpha subunit is responsible for the aldol cleavage of indoleglycerol phosphate to indole and glyceraldehyde 3-phosphate. This Bacteroides thetaiotaomicron (strain ATCC 29148 / DSM 2079 / JCM 5827 / CCUG 10774 / NCTC 10582 / VPI-5482 / E50) protein is Tryptophan synthase alpha chain.